The following is a 119-amino-acid chain: Large ribosomal subunit protein bL20 (119 aa).

This sequence belongs to the bacterial ribosomal protein bL20 family.

Its function is as follows. Binds directly to 23S ribosomal RNA and is necessary for the in vitro assembly process of the 50S ribosomal subunit. It is not involved in the protein synthesizing functions of that subunit. The protein is Large ribosomal subunit protein bL20 of Acinetobacter baylyi (strain ATCC 33305 / BD413 / ADP1).